We begin with the raw amino-acid sequence, 450 residues long: FAD-linked oxidoreductase penO (450 aa).

Residues 32–203 form the FAD-binding PCMH-type domain; that stretch reads PPELPYAIVK…TRFFIRTRPA (172 aa).

This sequence belongs to the oxygen-dependent FAD-linked oxidoreductase family. FAD is required as a cofactor.

It functions in the pathway secondary metabolite biosynthesis. FAD-linked oxidoreductase; part of the gene cluster that mediates the biosynthesis of the indole diterpenes penitrems. The geranylgeranyl diphosphate (GGPP) synthase penG catalyzes the first step in penitrem biosynthesis via conversion of farnesyl pyrophosphate and isopentyl pyrophosphate into geranylgeranyl pyrophosphate (GGPP). Condensation of indole-3-glycerol phosphate with GGPP by the prenyl transferase penC then forms 3-geranylgeranylindole (3-GGI). Epoxidation by the FAD-dependent monooxygenase penM leads to a epoxidized-GGI that is substrate of the terpene cyclase penB for cyclization to yield paspaline. Paspaline is subsequently converted to 13-desoxypaxilline by the cytochrome P450 monooxygenase penP, the latter being then converted to paxilline by the cytochrome P450 monooxygenase penQ. Paxilline is converted to beta-paxitriol via C-10 ketoreduction by the short-chain dehydrogenase PC-15 which can be monoprenylated at the C-20 by the indole diterpene prenyltransferase penD. A two-step elimination (acetylation and elimination) process performed by the O-acetyltransferase PC-16 and the P.simplicissimum ptmI-ortholog not yet identified in P.crustosum, leads to the production of the prenylated form of penijanthine. The FAD-linked oxidoreductase ptmO then converts the prenylated form of penijanthine into PC-M5 which is in turn transformed into PC-M4 by the aromatic dimethylallyltransferase PC-22. A series of oxidation steps involving 4 cytochrome P450 monooxygenases (PC-21, PC-05, PC-23, PC-20) and a FAD-dependent monooxygenase (PC-14) are required for the transformation of PC-M4 to penitrems A and E. Synthesis of these final products is proposed to proceed via penitrems D and C (PC-21, PC-05, PC-14) and penitrems B and F (PC-21, PC-05, PC-14, PC-23). The polypeptide is FAD-linked oxidoreductase penO (Penicillium crustosum (Blue mold fungus)).